A 552-amino-acid chain; its full sequence is Urocanate hydratase (552 aa).

Residues 49–50 (GG), Gln-127, 173–175 (GMG), Asp-193, 239–240 (NA), 260–264 (QTSAH), 270–271 (YI), and Tyr-319 each bind NAD(+). Cys-407 is a catalytic residue. Residue Gly-489 coordinates NAD(+).

It belongs to the urocanase family. NAD(+) is required as a cofactor.

It is found in the cytoplasm. It catalyses the reaction 4-imidazolone-5-propanoate = trans-urocanate + H2O. The protein operates within amino-acid degradation; L-histidine degradation into L-glutamate; N-formimidoyl-L-glutamate from L-histidine: step 2/3. Its function is as follows. Catalyzes the conversion of urocanate to 4-imidazolone-5-propionate. In Bacillus mycoides (strain KBAB4) (Bacillus weihenstephanensis), this protein is Urocanate hydratase.